Consider the following 60-residue polypeptide: Large ribosomal subunit protein bL32 (60 aa).

Residues 1-16 (MAVPKRKTTPSKRGMR) are compositionally biased toward basic residues. The tract at residues 1-34 (MAVPKRKTTPSKRGMRRAHDALSSPVYIEDKDSG) is disordered.

The protein belongs to the bacterial ribosomal protein bL32 family.

This chain is Large ribosomal subunit protein bL32, found in Maricaulis maris (strain MCS10) (Caulobacter maris).